Consider the following 133-residue polypeptide: Secretin (133 aa).

The first 22 residues, M1–A22, serve as a signal peptide directing secretion. The propeptide occupies L23–P30. V58 carries the post-translational modification Valine amide. S62 carries the post-translational modification Phosphoserine. Residues S62–R133 constitute a propeptide that is removed on maturation.

Belongs to the glucagon family. In terms of tissue distribution, highly expressed in the intestine. Also expressed in the hippocampus, cerebellum and the brain stem in adult mouse brain. In the hippocampus, expressed in the dentate gyrus, the hilus and the molecular layer.

It localises to the secreted. In terms of biological role, hormone involved in different processes, such as regulation of the pH of the duodenal content, food intake and water homeostasis. Exerts its biological effects by binding to secretin receptor (SCTR), a G-protein coupled receptor expressed in the basolateral domain of several cells. Acts as a key gastrointestinal hormone by regulating the pH of the duodenal content. Secreted by S cells of the duodenum in the crypts of Lieberkuehn and regulates the pH of the duodenum by (1) inhibiting the secretion of gastric acid from the parietal cells of the stomach and (2) stimulating the production of bicarbonate (NaHCO(3)) from the ductal cells of the pancreas. Production of bicarbonate is essential to neutralize the pH and ensure no damage is done to the small intestine by the gastric acid. In addition to regulating the pH of the duodenal content, plays a central role in diet induced thermogenesis: acts as a non-sympathetic brown fat (BAT) activator mediating prandial thermogenesis, which consequentially induces satiation. Mechanistically, secretin released by the gut after a meal binds to secretin receptor (SCTR) in brown adipocytes, activating brown fat thermogenesis by stimulating lipolysis, which is sensed in the brain and promotes satiation. Also able to stimulate lipolysis in white adipocytes. Also plays an important role in cellular osmoregulation: released into the systemic circulation in response to hyperosmolality and acts at different levels in the hypothalamus, pituitary and kidney to regulate water homeostasis. Also plays a role in the central nervous system, possibly by acting as a neuropeptide hormone: required for hippocampal synaptic function and neural progenitor cells maintenance. This Mus musculus (Mouse) protein is Secretin.